We begin with the raw amino-acid sequence, 491 residues long: mRNA cleavage and polyadenylation factor clp1 (491 aa).

ATP is bound by residues Glu-28 and Lys-78. Residues 128 to 160 (RAAAAQAQQQHPTHHQQQQQGRGAGAGVARSKP) are disordered. Low complexity predominate over residues 130–148 (AAAQAQQQHPTHHQQQQQG). 171 to 176 (GVGKTS) serves as a coordination point for ATP.

The protein belongs to the Clp1 family. Clp1 subfamily. In terms of assembly, component of a pre-mRNA cleavage factor complex. Interacts directly with PCF11.

It is found in the nucleus. In terms of biological role, required for endonucleolytic cleavage during polyadenylation-dependent pre-mRNA 3'-end formation. This Neurospora crassa (strain ATCC 24698 / 74-OR23-1A / CBS 708.71 / DSM 1257 / FGSC 987) protein is mRNA cleavage and polyadenylation factor clp1 (paa-7).